Reading from the N-terminus, the 456-residue chain is Bifunctional protein GlmU (456 aa).

The interval 1 to 229 is pyrophosphorylase; sequence MSTSPLSVVI…LSEVEGVNNR (229 aa). Residues 11–14, Lys25, Gln76, 81–82, 103–105, Gly140, Glu154, Asn169, and Asn227 contribute to the UDP-N-acetyl-alpha-D-glucosamine site; these read LAAG, GT, and YGD. Asp105 serves as a coordination point for Mg(2+). Asn227 provides a ligand contact to Mg(2+). The linker stretch occupies residues 230–250; that stretch reads LQLSALERAYQQQQAQRLLLA. The tract at residues 251–456 is N-acetyltransferase; that stretch reads GVMLTDPARF…SGWERPVKKK (206 aa). Positions 333 and 351 each coordinate UDP-N-acetyl-alpha-D-glucosamine. The active-site Proton acceptor is the His363. Tyr366 and Asn377 together coordinate UDP-N-acetyl-alpha-D-glucosamine. Acetyl-CoA-binding positions include Ala380, 386–387, Ser405, Ala423, and Arg440; that span reads NY.

The protein in the N-terminal section; belongs to the N-acetylglucosamine-1-phosphate uridyltransferase family. It in the C-terminal section; belongs to the transferase hexapeptide repeat family. In terms of assembly, homotrimer. Requires Mg(2+) as cofactor.

The protein resides in the cytoplasm. The catalysed reaction is alpha-D-glucosamine 1-phosphate + acetyl-CoA = N-acetyl-alpha-D-glucosamine 1-phosphate + CoA + H(+). It catalyses the reaction N-acetyl-alpha-D-glucosamine 1-phosphate + UTP + H(+) = UDP-N-acetyl-alpha-D-glucosamine + diphosphate. It functions in the pathway nucleotide-sugar biosynthesis; UDP-N-acetyl-alpha-D-glucosamine biosynthesis; N-acetyl-alpha-D-glucosamine 1-phosphate from alpha-D-glucosamine 6-phosphate (route II): step 2/2. The protein operates within nucleotide-sugar biosynthesis; UDP-N-acetyl-alpha-D-glucosamine biosynthesis; UDP-N-acetyl-alpha-D-glucosamine from N-acetyl-alpha-D-glucosamine 1-phosphate: step 1/1. Its pathway is bacterial outer membrane biogenesis; LPS lipid A biosynthesis. In terms of biological role, catalyzes the last two sequential reactions in the de novo biosynthetic pathway for UDP-N-acetylglucosamine (UDP-GlcNAc). The C-terminal domain catalyzes the transfer of acetyl group from acetyl coenzyme A to glucosamine-1-phosphate (GlcN-1-P) to produce N-acetylglucosamine-1-phosphate (GlcNAc-1-P), which is converted into UDP-GlcNAc by the transfer of uridine 5-monophosphate (from uridine 5-triphosphate), a reaction catalyzed by the N-terminal domain. In Edwardsiella ictaluri (strain 93-146), this protein is Bifunctional protein GlmU.